The sequence spans 226 residues: Calcium-binding protein 1 (226 aa).

Gly2 carries the N-myristoyl glycine lipid modification. Cys4 carries the S-palmitoyl cysteine lipid modification. 4 EF-hand domains span residues 81-116 (EEIEELREAFREFDKDKDGYINCRDLGNCMRTMGYM), 135-152 (GHVDFDDFVELMGPKLLA), 158-193 (IGVKELRDAFREFDTNGDGEISTSELREAMRKLLGH), and 195-226 (VGHRDIEEIIRDVDLNGDGRVDFEEFVRMMSR). Residues Asp94, Asp96, Asp98, Tyr100, and Asp105 each contribute to the Ca(2+) site. Ca(2+)-binding residues include Asp171, Asn173, Asp175, and Glu177. At Ser179 the chain carries Phosphoserine. Ca(2+)-binding residues include Glu182, Asp208, Asn210, Asp212, Arg214, and Glu219.

In terms of assembly, homodimer. Interacts (via C-terminus) with ITPR1, ITPR2 and ITPR3. This binding is calcium dependent and the interaction correlates with calcium concentration. An additional calcium-independent interaction with the N-terminus of ITPR1 results in a decreased InsP(3) binding to the receptor. Interacts with CACNA1A (via C-terminal CDB motif) in the pre- and postsynaptic membranes. Interacts with CACNA1C (via C-terminal C and IQ motifs). Interacts with CACNA1D. The binding to the C motif is calcium independent whereas the binding to IQ requires the presence of calcium and is mutually exclusive with calmodulin binding. Interacts with TRPC5 (via C-terminus). Interacts (via EF-hands 1 and 2) at microtubules with MAP1LC3B. Interacts with MYO1C. Interacts (via EF-hands 1 and 2) with NSMF (via the central NLS-containing motif region), the interaction occurs in a calcium dependent manner after synaptic NMDA receptor stimulation and prevents nuclear import of NSMF. Interacts with SPACA9. Phosphorylated. The phosphorylation regulates the activity.

It is found in the cytoplasm. The protein resides in the cytoskeleton. Its subcellular location is the perinuclear region. It localises to the cell membrane. The protein localises to the golgi apparatus. It is found in the postsynaptic density. Modulates calcium-dependent activity of inositol 1,4,5-triphosphate receptors (ITPRs). Inhibits agonist-induced intracellular calcium signaling. Enhances inactivation and does not support calcium-dependent facilitation of voltage-dependent P/Q-type calcium channels. Causes calcium-dependent facilitation and inhibits inactivation of L-type calcium channels by binding to the same sites as calmodulin in the C-terminal domain of CACNA1C, but has an opposite effect on channel function. Suppresses the calcium-dependent inactivation of CACNA1D. Inhibits TRPC5 channels. Prevents NMDA receptor-induced cellular degeneration. Required for the normal transfer of light signals through the retina. This chain is Calcium-binding protein 1 (CABP1), found in Bos taurus (Bovine).